A 217-amino-acid chain; its full sequence is Ribosomal RNA small subunit methyltransferase G (217 aa).

Residues G78, F83, 129-130 (GE), and R146 contribute to the S-adenosyl-L-methionine site.

This sequence belongs to the methyltransferase superfamily. RNA methyltransferase RsmG family.

It is found in the cytoplasm. It catalyses the reaction guanosine(527) in 16S rRNA + S-adenosyl-L-methionine = N(7)-methylguanosine(527) in 16S rRNA + S-adenosyl-L-homocysteine. Its function is as follows. Specifically methylates the N7 position of guanine in position 527 of 16S rRNA. This chain is Ribosomal RNA small subunit methyltransferase G, found in Geobacter sulfurreducens (strain ATCC 51573 / DSM 12127 / PCA).